The following is a 578-amino-acid chain: Acyl-CoA ligase AFT1-1 (578 aa).

Residues 210-218 (SSGTSGAQK), 350-355 (QCYGAT), Asp438, Arg457, and Lys554 contribute to the ATP site. The interval 281–350 (GVEDLLSIVE…RHHPTWKIKQ (70 aa)) is SBD1. Residues 351–413 (CYGATEAGTA…VSSPSLAIGY (63 aa)) are SBD2. A Peroxisomal targeting signal type 1 motif is present at residues 576–578 (SKI).

This sequence belongs to the ATP-dependent AMP-binding enzyme family.

The protein resides in the peroxisome. Its pathway is mycotoxin biosynthesis. Its function is as follows. Acyl-CoA ligase; part of the gene clusters that mediate the biosynthesis of the host-selective toxins (HSTs) AF-toxins responsible for Alternaria black spot of strawberry disease by the strawberry pathotype. AF-toxin I and III are valine derivatives of 2,3-dyhydroxy-isovaleric acid and 2-hydroxy-isovaleric acid respectively, while AF II is an isoleucine derivative of 2-hydroxy-valeric acid. These derivatives are bound to a 9,10-epoxy-8-hydroxy-9-methyl-decatrienoic acid (EDA) moiety. On cellular level, AF-toxins affect plasma membrane of susceptible cells and cause a sudden increase in loss of K(+) after a few minutes of toxin treatment. The aldo-keto reductase AFTS1 catalyzes the conversion of 2-keto-isovaleric acid (2-KIV) to 2-hydroxy-isovaleric acid (2-HIV) by reduction of its ketone to an alcohol. The acyl-CoA ligase AFT1, the hydrolase AFT2 and the enoyl-CoA hydratases AFT3 and AFT6, but also the polyketide synthase AFT9, the acyl-CoA dehydrogenase AFT10, the cytochrome P450 monooxygenase AFT11 and the oxidoreductase AFT12 are all involved in the biosynthesis of the AK-, AF- and ACT-toxin common EDA structural moiety. The exact role of each enzyme, and of additional enzymes identified within the AF-toxin clusters have still to be determined. The chain is Acyl-CoA ligase AFT1-1 from Alternaria alternata (Alternaria rot fungus).